Here is a 563-residue protein sequence, read N- to C-terminus: E3 ubiquitin-protein ligase IpaH2.5 (563 aa).

The segment at 1–270 (MIKSTNIQVI…PDYSGPQIFF (270 aa)) is interaction with target proteins. 8 LRR repeats span residues 69–90 (LQNQ…PDLP), 91–115 (PQIT…MLKV), 117–130 (HAQF…PALP), 131–150 (ETLE…PFLP), 151–170 (ENLT…PLLP), 171–195 (PELK…KLEG), 197–209 (ALAN…LPEL), and 210–233 (PFSM…VLRL). The segment at 271–281 (SMGNSATISAP) is linker. The segment at 282 to 563 (EHSLADAVTA…YRQLTDEVLA (282 aa)) is E3 ubiquitin-protein ligase catalytic domain. The NEL domain maps to 284–563 (SLADAVTAWF…YRQLTDEVLA (280 aa)). Residue cysteine 368 is the Glycyl thioester intermediate of the active site.

This sequence belongs to the LRR-containing bacterial E3 ligase family. In terms of assembly, interacts with human RBCK1/HOIL-1 and RNF31/HOIP components of the LUBAC complex. Ubiquitinated in the presence of host E1 ubiquitin-activating enzyme, E2 ubiquitin-conjugating enzyme and ubiquitin.

The protein localises to the secreted. It is found in the host cytoplasm. The catalysed reaction is S-ubiquitinyl-[E2 ubiquitin-conjugating enzyme]-L-cysteine + [acceptor protein]-L-lysine = [E2 ubiquitin-conjugating enzyme]-L-cysteine + N(6)-ubiquitinyl-[acceptor protein]-L-lysine.. It functions in the pathway protein modification; protein ubiquitination. With respect to regulation, exists in an autoinhibited state in the absence of substrate protein, probably due to interactions of the leucine-rich repeat domain with the catalytic domain. Is activated upon binding to a substrate protein. E3 ubiquitin-protein ligase effector that inhibits host cell innate immunity during bacterial infection by catalyzing 'Lys-48'-linked polyubiquitination and subsequent degradation of host RNF31/HOIP. Host RNF31/HOIP is the catalytic component of the LUBAC complex, which conjugates linear ('Met-1'-linked) polyubiquitin chains at the surface of bacteria invading the host cytosol to form the ubiquitin coat surrounding bacteria. The bacterial ubiquitin coat acts as an 'eat-me' signal for xenophagy and promotes NF-kappa-B activation. This chain is E3 ubiquitin-protein ligase IpaH2.5, found in Shigella flexneri.